Consider the following 156-residue polypeptide: Large ribosomal subunit protein uL22 (156 aa).

It belongs to the universal ribosomal protein uL22 family. Part of the 50S ribosomal subunit.

This protein binds specifically to 23S rRNA. It makes multiple contacts with different domains of the 23S rRNA in the assembled 50S subunit and ribosome. Its function is as follows. The globular domain of the protein is located near the polypeptide exit tunnel on the outside of the subunit, while an extended beta-hairpin is found that lines the wall of the exit tunnel in the center of the 70S ribosome. The protein is Large ribosomal subunit protein uL22 of Aeropyrum pernix (strain ATCC 700893 / DSM 11879 / JCM 9820 / NBRC 100138 / K1).